A 95-amino-acid polypeptide reads, in one-letter code: Scorpine-like peptide Smp76 (95 aa).

An N-terminal signal peptide occupies residues 1–19; it reads MNCKLTALLFLGLIVIASC. The 41-residue stretch at 55–95 folds into the BetaSPN-type CS-alpha/beta domain; the sequence is EFQCVANVDTLGNCKKHCAKTTGEKGYCHGTKCKCGIELSY. 3 disulfides stabilise this stretch: Cys-58–Cys-82, Cys-68–Cys-87, and Cys-72–Cys-89.

Disulfide bonds are critical for antiviral function, and their disruption inhibit viral activity. As to expression, expressed by the venom gland.

It localises to the secreted. Its function is as follows. Antibacterial peptide. Dose-dependently inhibits Dengue virus (DENV), Zika virus (ZIKV) and Hepatitis C virus (HCV) infections. Two mechanisms of action have been described by two different groups: one involving activity on extracellular particles, and the other regulating the immune system. On Dengue virus (DENV), Zika virus (ZIKV), suppress the established viral infection, similar to the effect of interferon (IFN)-beta. Mechanistically, upregulates the expression of IFN-beta by activating interferon regulatory transcription factor 3 (IRF3) phosphorylation. On HCV and DENV, acts by inactivating extra-cellular infectious particles without affecting viral replication. Shows very weak inhibition on measles virus. Is neither toxic nor hemolytic in vitro at high concentrations. In Scorpio palmatus (Israeli golden scorpion), this protein is Scorpine-like peptide Smp76.